We begin with the raw amino-acid sequence, 358 residues long: Aromatic amino acid aminotransferase (358 aa).

N6-(pyridoxal phosphate)lysine is present on Lys-222.

This sequence belongs to the class-II pyridoxal-phosphate-dependent aminotransferase family. Homodimer. Pyridoxal 5'-phosphate is required as a cofactor.

It carries out the reaction an aromatic L-alpha-amino acid + 2-oxoglutarate = an aromatic oxo-acid + L-glutamate. In terms of biological role, aminotransferase that catalyzes the conversion of aromatic amino acids and 2-oxoglutarate into corresponding aromatic oxo acids and L-glutamate. This Mycobacterium sp. (strain KMS) protein is Aromatic amino acid aminotransferase.